Here is a 452-residue protein sequence, read N- to C-terminus: Cobyrinate a,c-diamide synthase (452 aa).

One can recognise a GATase cobBQ-type domain in the interval 248–441 (RVAYALDAAF…LHIHFYQNLL (194 aa)). Catalysis depends on cysteine 330, which acts as the Nucleophile.

This sequence belongs to the CobB/CbiA family. The cofactor is Mg(2+).

It carries out the reaction cob(II)yrinate + 2 L-glutamine + 2 ATP + 2 H2O = cob(II)yrinate a,c diamide + 2 L-glutamate + 2 ADP + 2 phosphate + 2 H(+). Its pathway is cofactor biosynthesis; adenosylcobalamin biosynthesis; cob(II)yrinate a,c-diamide from sirohydrochlorin (anaerobic route): step 10/10. Functionally, catalyzes the ATP-dependent amidation of the two carboxylate groups at positions a and c of cobyrinate, using either L-glutamine or ammonia as the nitrogen source. The polypeptide is Cobyrinate a,c-diamide synthase (Listeria monocytogenes serotype 4b (strain F2365)).